The primary structure comprises 187 residues: Hypoxanthine/guanine phosphoribosyltransferase (187 aa).

Belongs to the purine/pyrimidine phosphoribosyltransferase family. Archaeal HPRT subfamily. As to quaternary structure, homodimer.

The protein resides in the cytoplasm. It catalyses the reaction IMP + diphosphate = hypoxanthine + 5-phospho-alpha-D-ribose 1-diphosphate. It carries out the reaction GMP + diphosphate = guanine + 5-phospho-alpha-D-ribose 1-diphosphate. Its pathway is purine metabolism; IMP biosynthesis via salvage pathway; IMP from hypoxanthine: step 1/1. In terms of biological role, catalyzes a salvage reaction resulting in the formation of IMP that is energically less costly than de novo synthesis. This is Hypoxanthine/guanine phosphoribosyltransferase from Methanopyrus kandleri (strain AV19 / DSM 6324 / JCM 9639 / NBRC 100938).